The chain runs to 283 residues: Bifunctional protein FolD (283 aa).

NADP(+) contacts are provided by residues 165 to 167 (GRS), Ser190, and Val231.

This sequence belongs to the tetrahydrofolate dehydrogenase/cyclohydrolase family. As to quaternary structure, homodimer.

The enzyme catalyses (6R)-5,10-methylene-5,6,7,8-tetrahydrofolate + NADP(+) = (6R)-5,10-methenyltetrahydrofolate + NADPH. It carries out the reaction (6R)-5,10-methenyltetrahydrofolate + H2O = (6R)-10-formyltetrahydrofolate + H(+). It participates in one-carbon metabolism; tetrahydrofolate interconversion. Catalyzes the oxidation of 5,10-methylenetetrahydrofolate to 5,10-methenyltetrahydrofolate and then the hydrolysis of 5,10-methenyltetrahydrofolate to 10-formyltetrahydrofolate. In Anoxybacillus flavithermus (strain DSM 21510 / WK1), this protein is Bifunctional protein FolD.